A 216-amino-acid polypeptide reads, in one-letter code: MTTKQIKGVLGEKLGMTQVFDESGKVVPVTVLKAGPAVVTRVRTPETDGYSAIQLGYGHINPRKVNKPLGDYLRKHNLTPRRHYVEVRTSDASEYTVGQEITADVFQPGEKVDVTGKTKGKGYAGVMKRHGFGGLGASHGTQRKHRSPGSIGGCATPGRVFKGMRMAGRMGNVRRTVQNLTVHSVDAEKGLLLVKGAVPGPNGGLVLVRTAVKGGK.

The disordered stretch occupies residues 135–156 (LGASHGTQRKHRSPGSIGGCAT).

This sequence belongs to the universal ribosomal protein uL3 family. Part of the 50S ribosomal subunit. Forms a cluster with proteins L14 and L19.

Its function is as follows. One of the primary rRNA binding proteins, it binds directly near the 3'-end of the 23S rRNA, where it nucleates assembly of the 50S subunit. The chain is Large ribosomal subunit protein uL3 from Thermobifida fusca (strain YX).